We begin with the raw amino-acid sequence, 118 residues long: uncharacterized protein (118 aa).

This is an uncharacterized protein from Escherichia coli (strain UTI89 / UPEC).